The following is a 653-amino-acid chain: Endoglin (653 aa).

An N-terminal signal peptide occupies residues 1–26 (MDRGVLPLPITLLFVIYSFVPTTGLA). The segment at 27-47 (ERVGCDLQPVDPTRGEVTFTT) is OR1, N-terminal part. Positions 27-337 (ERVGCDLQPV…SSCGGVFQTT (311 aa)) are required for interaction with GDF2. The Extracellular portion of the chain corresponds to 27–581 (ERVGCDLQPV…IVSPDLSGKG (555 aa)). Intrachain disulfides connect cysteine 31–cysteine 209, cysteine 54–cysteine 184, cysteine 244–cysteine 330, cysteine 350–cysteine 382, cysteine 363–cysteine 442, cysteine 394–cysteine 412, and cysteine 493–cysteine 549. Positions 48–201 (SQVSEGCVAQ…MGATLEWQPR (154 aa)) are OR2. N-linked (GlcNAc...) asparagine glycosylation is found at asparagine 89, asparagine 135, and asparagine 266. The OR1, C-terminal part stretch occupies residues 202–330 (AQTPVQSCRL…SNVSLRASSC (129 aa)). The segment at 270–282 (QILTTGEYSVKIF) is essential for interaction with GDF2. 2 N-linked (GlcNAc...) asparagine glycosylation sites follow: asparagine 307 and asparagine 322. One can recognise a ZP domain in the interval 363 to 510 (CGNQVMTLAL…GDMVELIQSR (148 aa)). A helical transmembrane segment spans residues 582–606 (LVLPSVLGITFGAFLIGALLTAALW). Residues 607-653 (YIYSHTRGPSKREPVVAVAAPASSESSSTNHSIGSTQSTPCSTSSMA) are Cytoplasmic-facing. The segment covering 624-634 (VAAPASSESSS) has biased composition (low complexity). A disordered region spans residues 624 to 653 (VAAPASSESSSTNHSIGSTQSTPCSTSSMA). Over residues 635–653 (TNHSIGSTQSTPCSTSSMA) the composition is skewed to polar residues. Serine 641 and serine 644 each carry phosphoserine; by TGFBR1.

Homodimer; disulfide-linked. Forms a heteromeric complex with the signaling receptors for transforming growth factor-beta: TGFBR1 and/or TGFBR2. Interacts with TGFB1. It is able to bind TGFB1 and TGFB2 with high affinity, but not TGFB3. Interacts with GDF2, forming a heterotetramer with a 2:2 stoichiometry. Interacts with ACVRL1. Can form a heteromeric complex with GDF2 and ACVRL1. Interacts with BMP10. Interacts with DYNLT4. Interacts with ARRB2. As to expression, detected on blood vessels (at protein level). Detected on adult pulmonary artery, capillaries supporting the heart muscle and lung alveolar capillary endothelial cells. Endoglin is restricted to endothelial cells in all tissues except bone marrow and is also found in stromal cells within the connective tissue of intestine, stomach, heart, skeletal muscle, uterus, ovary, oviduct, testis and thymus.

The protein localises to the cell membrane. Functionally, vascular endothelium glycoprotein that plays an important role in the regulation of angiogenesis. Required for normal structure and integrity of adult vasculature. Regulates the migration of vascular endothelial cells. Required for normal extraembryonic angiogenesis and for embryonic heart development. May regulate endothelial cell shape changes in response to blood flow, which drive vascular remodeling and establishment of normal vascular morphology during angiogenesis. May play a role in the binding of endothelial cells to integrins. Acts as a TGF-beta coreceptor and is involved in the TGF-beta/BMP signaling cascade that ultimately leads to the activation of SMAD transcription factors. Required for GDF2/BMP9 signaling through SMAD1 in endothelial cells and modulates TGFB1 signaling through SMAD3. The sequence is that of Endoglin (Eng) from Mus musculus (Mouse).